The primary structure comprises 319 residues: 4-hydroxy-3-methylbut-2-enyl diphosphate reductase (319 aa).

Cys-17 contacts [4Fe-4S] cluster. Residues His-46 and His-79 each contribute to the (2E)-4-hydroxy-3-methylbut-2-enyl diphosphate site. His-46 and His-79 together coordinate dimethylallyl diphosphate. His-46 and His-79 together coordinate isopentenyl diphosphate. Position 101 (Cys-101) interacts with [4Fe-4S] cluster. Residue His-129 coordinates (2E)-4-hydroxy-3-methylbut-2-enyl diphosphate. His-129 lines the dimethylallyl diphosphate pocket. His-129 contacts isopentenyl diphosphate. Residue Glu-131 is the Proton donor of the active site. A (2E)-4-hydroxy-3-methylbut-2-enyl diphosphate-binding site is contributed by Thr-170. Residue Cys-200 coordinates [4Fe-4S] cluster. (2E)-4-hydroxy-3-methylbut-2-enyl diphosphate is bound by residues Ser-228, Ser-229, Asn-230, and Ser-273. The dimethylallyl diphosphate site is built by Ser-228, Ser-229, Asn-230, and Ser-273. Isopentenyl diphosphate is bound by residues Ser-228, Ser-229, Asn-230, and Ser-273.

This sequence belongs to the IspH family. Requires [4Fe-4S] cluster as cofactor.

The enzyme catalyses isopentenyl diphosphate + 2 oxidized [2Fe-2S]-[ferredoxin] + H2O = (2E)-4-hydroxy-3-methylbut-2-enyl diphosphate + 2 reduced [2Fe-2S]-[ferredoxin] + 2 H(+). It catalyses the reaction dimethylallyl diphosphate + 2 oxidized [2Fe-2S]-[ferredoxin] + H2O = (2E)-4-hydroxy-3-methylbut-2-enyl diphosphate + 2 reduced [2Fe-2S]-[ferredoxin] + 2 H(+). Its pathway is isoprenoid biosynthesis; dimethylallyl diphosphate biosynthesis; dimethylallyl diphosphate from (2E)-4-hydroxy-3-methylbutenyl diphosphate: step 1/1. The protein operates within isoprenoid biosynthesis; isopentenyl diphosphate biosynthesis via DXP pathway; isopentenyl diphosphate from 1-deoxy-D-xylulose 5-phosphate: step 6/6. Functionally, catalyzes the conversion of 1-hydroxy-2-methyl-2-(E)-butenyl 4-diphosphate (HMBPP) into a mixture of isopentenyl diphosphate (IPP) and dimethylallyl diphosphate (DMAPP). Acts in the terminal step of the DOXP/MEP pathway for isoprenoid precursor biosynthesis. This is 4-hydroxy-3-methylbut-2-enyl diphosphate reductase from Cereibacter sphaeroides (strain ATCC 17029 / ATH 2.4.9) (Rhodobacter sphaeroides).